A 907-amino-acid chain; its full sequence is MLASLIGGIFGTKNERELKRMRKIVEQINALEPTISALSDADLSAKTPEFKQRYNNGESLDKLLPEAFAVCREAAKRVMGMRHYDVQLIGGITLHEGKIAEMRTGEGKTLMGTLACYLNALSGEGVHVITVNDYLAQRDAELNRPLFEFLGLSIGTIYSMQEPAEKAAAYLADITYGTNNEFGFDYLRDNMVFSLAEKKQRGLHYAIIDEVDSILIDEARTPLIISGQSEDSSHLYTAINTIPPKLRPQKEEKVADGGHFWIDEKQRSVEMTEIGYETVEQELIQMGLLAEGESLYSATNLNLVHHVSAAIRAHFLFQRDVHYIIHDGEVIIVDEHTGRTMPGRRWSEGLHQAVEAKEGLAIQPENQTLATTTFQNYFRLYKKLSGMTGTADTEAAEMKEIYGLDVVIIPTHRPMIRNDQNDLIYLNRNGKYNAIIQEIMNIRQQGVAPILIGTATIEASEILSSKLKQAGIHHEVLNAKQHEREADIIAQAGSPNAVTIATNMAGRGTDIILGGNWKAKLAKLENPTPEDEARLKAQWEQDHEDVLQAGGLHIIGSERHESRRIDNQLRGRAGRQGDPGVSRFYLSLEDDLMRIFAGDRVVAMMRAMGLKEDEAIEHKMVSRSIENAQRKVEARNFDIRKNLLKYDDVNNEQRKIIYSQRDEILAENTLQEYVEEMHREVMQAMIANFIPPESIHDQWDVEGLENALRIDLGIELPVQEWLEQDRRLDEEGLVERISDEVIARYRQRRAQMGDESAAMLERHFVLNSLDRHWKDHLAAMDYLRQGIHLRGYAQKNPEQEYKKEAFNLFVNMLGVIKTDVVTDLSRVHIPTPEELAEMEAQQQQQAEAMKLSFEHDDVDGLTGEVTASQEALNDSATEQQTFPVPESRNAPCPCGSGLKYKQCHGKI.

ATP contacts are provided by residues Q87, 105 to 109 (GEGKT), and D510. C892, C894, C903, and H904 together coordinate Zn(2+).

The protein belongs to the SecA family. Monomer and homodimer. Part of the essential Sec protein translocation apparatus which comprises SecA, SecYEG and auxiliary proteins SecDF-YajC and YidC. It depends on Zn(2+) as a cofactor.

Its subcellular location is the cell inner membrane. The protein resides in the cytoplasm. The catalysed reaction is ATP + H2O + cellular proteinSide 1 = ADP + phosphate + cellular proteinSide 2.. Its function is as follows. Part of the Sec protein translocase complex. Interacts with the SecYEG preprotein conducting channel. Has a central role in coupling the hydrolysis of ATP to the transfer of proteins into and across the cell membrane, serving both as a receptor for the preprotein-SecB complex and as an ATP-driven molecular motor driving the stepwise translocation of polypeptide chains across the membrane. The polypeptide is Protein translocase subunit SecA (Acinetobacter baumannii (strain AB0057)).